The primary structure comprises 102 residues: Small ribosomal subunit protein uS10 (102 aa).

The protein belongs to the universal ribosomal protein uS10 family. Part of the 30S ribosomal subunit.

Functionally, involved in the binding of tRNA to the ribosomes. This chain is Small ribosomal subunit protein uS10, found in Dehalococcoides mccartyi (strain ATCC BAA-2266 / KCTC 15142 / 195) (Dehalococcoides ethenogenes (strain 195)).